A 94-amino-acid chain; its full sequence is Cell division topological specificity factor (94 aa).

Belongs to the MinE family.

Functionally, prevents the cell division inhibition by proteins MinC and MinD at internal division sites while permitting inhibition at polar sites. This ensures cell division at the proper site by restricting the formation of a division septum at the midpoint of the long axis of the cell. The sequence is that of Cell division topological specificity factor from Alkalilimnicola ehrlichii (strain ATCC BAA-1101 / DSM 17681 / MLHE-1).